The chain runs to 692 residues: Elongation factor G (692 aa).

One can recognise a tr-type G domain in the interval 8-282 (KDYRNIGIMA…AVVDYLPSPL (275 aa)). GTP is bound by residues 17 to 24 (AHIDAGKT), 81 to 85 (DTPGH), and 135 to 138 (NKMD).

It belongs to the TRAFAC class translation factor GTPase superfamily. Classic translation factor GTPase family. EF-G/EF-2 subfamily.

The protein localises to the cytoplasm. In terms of biological role, catalyzes the GTP-dependent ribosomal translocation step during translation elongation. During this step, the ribosome changes from the pre-translocational (PRE) to the post-translocational (POST) state as the newly formed A-site-bound peptidyl-tRNA and P-site-bound deacylated tRNA move to the P and E sites, respectively. Catalyzes the coordinated movement of the two tRNA molecules, the mRNA and conformational changes in the ribosome. The protein is Elongation factor G (fusA) of Mycoplasmopsis pulmonis (strain UAB CTIP) (Mycoplasma pulmonis).